Reading from the N-terminus, the 768-residue chain is Probable beta-glucosidase M (768 aa).

The first 19 residues, Met1–Ala19, serve as a signal peptide directing secretion. Asn25, Asn72, and Asn259 each carry an N-linked (GlcNAc...) asparagine glycan. Residue Asp287 is part of the active site. Asn315, Asn322, Asn394, Asn434, Asn472, Asn543, and Asn651 each carry an N-linked (GlcNAc...) asparagine glycan.

The protein belongs to the glycosyl hydrolase 3 family.

Its subcellular location is the secreted. It carries out the reaction Hydrolysis of terminal, non-reducing beta-D-glucosyl residues with release of beta-D-glucose.. Its pathway is glycan metabolism; cellulose degradation. Beta-glucosidases are one of a number of cellulolytic enzymes involved in the degradation of cellulosic biomass. Catalyzes the last step releasing glucose from the inhibitory cellobiose. In Aspergillus flavus (strain ATCC 200026 / FGSC A1120 / IAM 13836 / NRRL 3357 / JCM 12722 / SRRC 167), this protein is Probable beta-glucosidase M (bglM).